The chain runs to 210 residues: uncharacterized protein (210 aa).

This is an uncharacterized protein from Escherichia coli (Bacteriophage T4).